We begin with the raw amino-acid sequence, 509 residues long: Cobyric acid synthase (509 aa).

The region spanning 262–459 (EIKVGIIKLP…IHGIFENDSW (198 aa)) is the GATase cobBQ-type domain. The Nucleophile role is filled by Cys-343. Residue His-451 is part of the active site.

The protein belongs to the CobB/CobQ family. CobQ subfamily.

The protein operates within cofactor biosynthesis; adenosylcobalamin biosynthesis. Its function is as follows. Catalyzes amidations at positions B, D, E, and G on adenosylcobyrinic A,C-diamide. NH(2) groups are provided by glutamine, and one molecule of ATP is hydrogenolyzed for each amidation. The protein is Cobyric acid synthase of Prochlorococcus marinus (strain MIT 9301).